Reading from the N-terminus, the 726-residue chain is Transmembrane channel-like protein 8 (726 aa).

Topologically, residues 1–114 (MLLPRSVSSE…GIRSYFTFLR (114 aa)) are cytoplasmic. At Ser-6 the chain carries Phosphoserine. The helical transmembrane segment at 115 to 135 (FLLLLNLLSLLLTASFVLLPL) threads the bilayer. Over 136–200 (VWLRPPDPGP…VGPESSSVYS (65 aa)) the chain is Lumenal. A glycan (N-linked (GlcNAc...) asparagine) is linked at Asn-148. Residues 201 to 221 (IRLAYLLSPLACLLLCFCGTL) form a helical membrane-spanning segment. Residues 222 to 299 (RRMVKGLPQK…AQTACRLLSY (78 aa)) are Cytoplasmic-facing. Residues 300–320 (LRVNVLNGLLVVGAISAIFWA) traverse the membrane as a helical segment. Residues 321–338 (TKYSQDNKEESLFLLLQY) are Lumenal-facing. A helical transmembrane segment spans residues 339-359 (LPPGVIALVNFLGPLLFTFLV). Residues 360–426 (QLENYPPNTE…QCWENSVGEE (67 aa)) lie on the Cytoplasmic side of the membrane. A TMC domain region spans residues 362–530 (ENYPPNTEVN…SSRPFRASSS (169 aa)). The chain crosses the membrane as a helical span at residues 427 to 447 (LYKLSIFNFLLTVAFAFLVTL). Over 448-488 (PRRLLVDRFSGRFWAWLEREEFLVPKNVLDIVAGQTVTWMG) the chain is Lumenal. Residues 489–509 (LFYCPLLPLLNSVFLFLTFYI) traverse the membrane as a helical segment. Over 510-531 (KKYTLLKNSRASSRPFRASSST) the chain is Cytoplasmic. The chain crosses the membrane as a helical span at residues 532 to 552 (FFFQLVLLLGLLLAAVPLGYV). The Lumenal segment spans residues 553–594 (VSSIHSSWDCGLFTNYSAPWQVVPELVALGLPPIGQRALHYL). N-linked (GlcNAc...) asparagine glycosylation is present at Asn-567. A helical transmembrane segment spans residues 595 to 615 (GSHAFSFPLLIMLSLVLTVCV). Residues 616 to 726 (SQTQANARAI…RFRFPSGAEL (111 aa)) are Cytoplasmic-facing. The tract at residues 651-726 (PEPGPSDSPG…RFRFPSGAEL (76 aa)) is disordered. Pro residues predominate over residues 652 to 662 (EPGPSDSPGPK). Phosphoserine occurs at positions 658 and 673.

Belongs to the TMC family. As to quaternary structure, interacts with TMC6. Interacts and forms a complex with TMC6 and CIB1; the interaction stabilizes each component of the complex. Interacts and forms a complex with TMC6 and SLC30A1/ZNT1; the interaction regulates zinc transport into the ER. Interacts with TRADD; the interaction competes with TRADD/RIPK1/TRAF2/cIAPs complex I formation and facilites complex II formation. In terms of assembly, (Microbial infection) Interacts with human papillomavirus 16/HPV16 protein E5; the interaction alleviates TMC8-mediated transcription factors inhibition. In terms of tissue distribution, expressed in placenta, prostate and testis.

The protein localises to the endoplasmic reticulum membrane. Its subcellular location is the golgi apparatus membrane. It localises to the nucleus membrane. Functionally, acts as a regulatory protein involved in the regulation of numerous cellular processes. Together with its homolog TMC6/EVER1, forms a complex with calcium-binding protein CIB1 in lymphocytes and keratynocytes where TMC6 and TMC8 stabilize CIB1 levels and reciprocally. Together with TMC6, also forms a complex with and activates zinc transporter ZNT1 at the ER membrane of keratynocytes, thereby facilitating zinc uptake into the ER. Also inhibits receptor-mediated calcium release from ER stores and calcium activated and volume regulated chloride channels. Down-regulates the activity of transcription factors induced by zinc and cytokines. Also sequesters TRADD which impairs the recruitment of TRAF2 and RIPK1 in the pro-survival complex I and promotes proapoptotic complex II formation, and may therefore be involved in TNF-induced cell death/survival decisions. This Homo sapiens (Human) protein is Transmembrane channel-like protein 8.